Here is a 108-residue protein sequence, read N- to C-terminus: Complement inhibitor CirpT2 (108 aa).

An N-terminal signal peptide occupies residues 1-19 (MRTLVASLCVFAVFSAVCC). Disulfide bonds link cysteine 40–cysteine 64, cysteine 59–cysteine 98, cysteine 76–cysteine 99, and cysteine 85–cysteine 104.

This sequence belongs to the CirpT family. Expressed in salivary glands.

It localises to the secreted. Its function is as follows. Complement inhibitor. Prevents complement-mediated activation of C5 by sterically preventing direct binding of C5 to its convertase (binding with domains MG4 and MG5). Binds C5 at a different binding site than the other tick complement inhibitors OmCI and RaCI3, and the drug eculizumab. Inhibits the complement in human, rat and guinea pig, and also shows a reduced inhibition in rabbit and pig. In Dermacentor andersoni (Rocky mountain wood tick), this protein is Complement inhibitor CirpT2.